Here is a 165-residue protein sequence, read N- to C-terminus: Transcription elongation factor GreA (165 aa).

Residues 55–78 (AAKEEQGKQELRVRQLTQLLESAK) are a coiled coil.

The protein belongs to the GreA/GreB family.

In terms of biological role, necessary for efficient RNA polymerase transcription elongation past template-encoded arresting sites. The arresting sites in DNA have the property of trapping a certain fraction of elongating RNA polymerases that pass through, resulting in locked ternary complexes. Cleavage of the nascent transcript by cleavage factors such as GreA or GreB allows the resumption of elongation from the new 3'terminus. GreA releases sequences of 2 to 3 nucleotides. The polypeptide is Transcription elongation factor GreA (Streptomyces coelicolor (strain ATCC BAA-471 / A3(2) / M145)).